Here is a 707-residue protein sequence, read N- to C-terminus: Alpha-hemolysin translocation ATP-binding protein HlyB (707 aa).

The Peptidase C39 domain maps to 2 to 125 (DFHHKNNYGL…DLYQGNIILI (124 aa)). Residue His83 is part of the active site. One can recognise an ABC transmembrane type-1 domain in the interval 154 to 436 (FIETLIVSVF…LAQLWQDFQQ (283 aa)). A run of 5 helical transmembrane segments spans residues 158–178 (LIVS…FQVV), 191–211 (LNII…LSGL), 269–289 (ALTS…MWYY), 295–315 (LVIL…SPIL), and 387–407 (AVMI…DLSI). Residues 468-703 (ISFRNIRFRY…PESLYHYLHQ (236 aa)) form the ABC transporter domain. Residue 502–509 (GRSGSGKS) participates in ATP binding.

The protein belongs to the ABC transporter superfamily. Protein-1 exporter (TC 3.A.1.109) family.

Its subcellular location is the cell membrane. Its function is as follows. Involved in the export of hemolysin A. This chain is Alpha-hemolysin translocation ATP-binding protein HlyB (hlyB), found in Proteus vulgaris.